The following is a 1477-amino-acid chain: Inositol hexakisphosphate and diphosphoinositol-pentakisphosphate kinase 1 (1477 aa).

The segment at 27–47 is disordered; that stretch reads TRGLGMRPEESDSELLEDEED. The span at 37-47 shows a compositional bias: acidic residues; it reads SDSELLEDEED. 64–65 is a substrate binding site; sequence KK. Residues R145, K198, H205, R224, 248 to 251, and 257 to 259 contribute to the ATP site; these read EEFM and DVK. 224–225 is a binding site for substrate; the sequence is RK. Substrate is bound by residues K259 and R273. Residues S275, D320, and 332–334 each bind ATP; that span reads DVN. 337–340 provides a ligand contact to substrate; it reads SFVK. Residues 382-453 form a polyphosphoinositide-binding domain region; that stretch reads PTTSGTMMEL…VLDITRLLLA (72 aa). A disordered region spans residues 910–1016; the sequence is KGVEEEGSAP…PTEMKQSGLG (107 aa). Phosphoserine occurs at positions 940 and 983. A compositionally biased stretch (polar residues) spans 1001–1016; it reads FSSSRPPTEMKQSGLG. Phosphoserine is present on residues S1033, S1069, S1141, and S1148. 2 disordered regions span residues 1131–1248 and 1438–1477; these read HSNQ…KPCQ and REEV…SFSH. Residues 1164–1182 show a composition bias toward low complexity; sequence SSGPSSTVSSAGPSSPTAV. Over residues 1446–1460 the composition is skewed to polar residues; the sequence is CPPSNANPQSQSLAP.

The protein belongs to the histidine acid phosphatase family. VIP1 subfamily.

It is found in the cytoplasm. The protein localises to the cytosol. The protein resides in the cell membrane. It catalyses the reaction 1D-myo-inositol hexakisphosphate + ATP = 1-diphospho-1D-myo-inositol 2,3,4,5,6-pentakisphosphate + ADP. The catalysed reaction is 5-diphospho-1D-myo-inositol 1,2,3,4,6-pentakisphosphate + ATP + H(+) = 1,5-bis(diphospho)-1D-myo-inositol 2,3,4,6-tetrakisphosphate + ADP. Its function is as follows. Bifunctional inositol kinase that acts in concert with the IP6K kinases IP6K1, IP6K2 and IP6K3 to synthesize the diphosphate group-containing inositol pyrophosphates diphosphoinositol pentakisphosphate, PP-InsP5, and bis-diphosphoinositol tetrakisphosphate, (PP)2-InsP4. PP-InsP5 and (PP)2-InsP4, also respectively called InsP7 and InsP8, regulate a variety of cellular processes, including apoptosis, vesicle trafficking, cytoskeletal dynamics, exocytosis, insulin signaling and neutrophil activation. Phosphorylates inositol hexakisphosphate (InsP6) at position 1 to produce PP-InsP5 which is in turn phosphorylated by IP6Ks to produce (PP)2-InsP4. Alternatively, phosphorylates PP-InsP5 at position 1, produced by IP6Ks from InsP6, to produce (PP)2-InsP4. Activated when cells are exposed to hyperosmotic stress. This is Inositol hexakisphosphate and diphosphoinositol-pentakisphosphate kinase 1 from Bos taurus (Bovine).